A 500-amino-acid polypeptide reads, in one-letter code: 2-isopropylmalate synthase (500 aa).

The 262-residue stretch at 5–266 folds into the Pyruvate carboxyltransferase domain; that stretch reads LFIFDTTLRD…ITNITTNKIY (262 aa). The Mn(2+) site is built by D14, H202, H204, and N238. Positions 389–500 are regulatory domain; sequence KLEYLQVTSG…VDAINKFIVD (112 aa).

Belongs to the alpha-IPM synthase/homocitrate synthase family. LeuA type 1 subfamily. In terms of assembly, homodimer. Mn(2+) is required as a cofactor.

It localises to the cytoplasm. The catalysed reaction is 3-methyl-2-oxobutanoate + acetyl-CoA + H2O = (2S)-2-isopropylmalate + CoA + H(+). It participates in amino-acid biosynthesis; L-leucine biosynthesis; L-leucine from 3-methyl-2-oxobutanoate: step 1/4. Its function is as follows. Catalyzes the condensation of the acetyl group of acetyl-CoA with 3-methyl-2-oxobutanoate (2-ketoisovalerate) to form 3-carboxy-3-hydroxy-4-methylpentanoate (2-isopropylmalate). This chain is 2-isopropylmalate synthase, found in Parabacteroides distasonis (strain ATCC 8503 / DSM 20701 / CIP 104284 / JCM 5825 / NCTC 11152).